We begin with the raw amino-acid sequence, 230 residues long: Large ribosomal subunit protein uL1 (230 aa).

It belongs to the universal ribosomal protein uL1 family. As to quaternary structure, part of the 50S ribosomal subunit.

In terms of biological role, binds directly to 23S rRNA. The L1 stalk is quite mobile in the ribosome, and is involved in E site tRNA release. Functionally, protein L1 is also a translational repressor protein, it controls the translation of the L11 operon by binding to its mRNA. The chain is Large ribosomal subunit protein uL1 from Paramagnetospirillum magneticum (strain ATCC 700264 / AMB-1) (Magnetospirillum magneticum).